The sequence spans 169 residues: Translationally-controlled tumor protein homolog (169 aa).

A TCTP domain is found at 1–169 (MLIYKDILTG…WKHGLEEMKV (169 aa)).

It belongs to the TCTP family.

Its subcellular location is the cytoplasm. The protein localises to the cytoskeleton. Its function is as follows. Involved in protein synthesis. Involved in microtubule stabilization. This chain is Translationally-controlled tumor protein homolog, found in Alternaria alternata (Alternaria rot fungus).